Here is a 580-residue protein sequence, read N- to C-terminus: NADH-quinone oxidoreductase subunit C/D (580 aa).

Residues methionine 1–phenylalanine 171 are NADH dehydrogenase I subunit C. An NADH dehydrogenase I subunit D region spans residues glutamate 195–arginine 580.

This sequence in the N-terminal section; belongs to the complex I 30 kDa subunit family. The protein in the C-terminal section; belongs to the complex I 49 kDa subunit family. In terms of assembly, NDH-1 is composed of 13 different subunits. Subunits NuoB, CD, E, F, and G constitute the peripheral sector of the complex.

The protein resides in the cell inner membrane. It carries out the reaction a quinone + NADH + 5 H(+)(in) = a quinol + NAD(+) + 4 H(+)(out). In terms of biological role, NDH-1 shuttles electrons from NADH, via FMN and iron-sulfur (Fe-S) centers, to quinones in the respiratory chain. The immediate electron acceptor for the enzyme in this species is believed to be ubiquinone. Couples the redox reaction to proton translocation (for every two electrons transferred, four hydrogen ions are translocated across the cytoplasmic membrane), and thus conserves the redox energy in a proton gradient. The chain is NADH-quinone oxidoreductase subunit C/D from Cereibacter sphaeroides (strain ATCC 17025 / ATH 2.4.3) (Rhodobacter sphaeroides).